The chain runs to 429 residues: Histidine--tRNA ligase (429 aa).

It belongs to the class-II aminoacyl-tRNA synthetase family. In terms of assembly, homodimer.

It localises to the cytoplasm. It carries out the reaction tRNA(His) + L-histidine + ATP = L-histidyl-tRNA(His) + AMP + diphosphate + H(+). This Streptococcus pneumoniae serotype 2 (strain D39 / NCTC 7466) protein is Histidine--tRNA ligase.